We begin with the raw amino-acid sequence, 269 residues long: Ribosomal RNA small subunit methyltransferase J (269 aa).

S-adenosyl-L-methionine is bound by residues 124–125 and D188; that span reads ER.

It belongs to the methyltransferase superfamily. RsmJ family.

The protein localises to the cytoplasm. The catalysed reaction is guanosine(1516) in 16S rRNA + S-adenosyl-L-methionine = N(2)-methylguanosine(1516) in 16S rRNA + S-adenosyl-L-homocysteine + H(+). Specifically methylates the guanosine in position 1516 of 16S rRNA. The polypeptide is Ribosomal RNA small subunit methyltransferase J (Saccharophagus degradans (strain 2-40 / ATCC 43961 / DSM 17024)).